We begin with the raw amino-acid sequence, 245 residues long: Octopine transport system permease protein OccM (245 aa).

5 helical membrane-spanning segments follow: residues Phe-12–Leu-32, Phe-57–Gly-77, Ala-96–Met-116, Ile-163–Ile-183, and Ile-204–Trp-224. The region spanning Ile-19–Phe-216 is the ABC transmembrane type-1 domain.

This sequence belongs to the binding-protein-dependent transport system permease family. HisMQ subfamily.

It is found in the cell inner membrane. Functionally, component of the octopine active transport system probably consisting of four subunits: Q, M, P and T. This is Octopine transport system permease protein OccM (occM) from Rhizobium radiobacter (Agrobacterium tumefaciens).